Consider the following 474-residue polypeptide: Nuclear receptor ROR-alpha B (474 aa).

The segment at residues 14–89 (SIPCKICGDK…VGMSRDAVKF (76 aa)) is a DNA-binding region (nuclear receptor). 2 NR C4-type zinc fingers span residues 17 to 37 (CKIC…CEGC) and 53 to 72 (CPRQ…CQHC). Over residues 98-124 (DSLFAEVQKHRQQQQDDKTGDESEKNQ) the composition is skewed to basic and acidic residues. The disordered stretch occupies residues 98 to 144 (DSLFAEVQKHRQQQQDDKTGDESEKNQESQAPGEAEPLTPSYALSSS). The 239-residue stretch at 223–461 (DLEHLSENIC…TRFPPLYKEL (239 aa)) folds into the NR LBD domain. The interval 450 to 461 (VHTRFPPLYKEL) is AF-2.

The protein belongs to the nuclear hormone receptor family.

The protein localises to the nucleus. Nuclear receptor that binds DNA as a monomer to ROR response elements (RORE). Required for proper cerebellum development. The polypeptide is Nuclear receptor ROR-alpha B (rorab) (Danio rerio (Zebrafish)).